The following is a 213-amino-acid chain: Protein-L-isoaspartate O-methyltransferase (213 aa).

Ser62 is an active-site residue.

It belongs to the methyltransferase superfamily. L-isoaspartyl/D-aspartyl protein methyltransferase family.

It localises to the cytoplasm. The enzyme catalyses [protein]-L-isoaspartate + S-adenosyl-L-methionine = [protein]-L-isoaspartate alpha-methyl ester + S-adenosyl-L-homocysteine. Its function is as follows. Catalyzes the methyl esterification of L-isoaspartyl residues in peptides and proteins that result from spontaneous decomposition of normal L-aspartyl and L-asparaginyl residues. It plays a role in the repair and/or degradation of damaged proteins. The chain is Protein-L-isoaspartate O-methyltransferase from Idiomarina loihiensis (strain ATCC BAA-735 / DSM 15497 / L2-TR).